A 350-amino-acid polypeptide reads, in one-letter code: B1 bradykinin receptor (350 aa).

Residues 1-41 (MASRAPLELLPLNRSQLSPPNATTCDDAPEAWDLLHRVLPS) lie on the Extracellular side of the membrane. N-linked (GlcNAc...) asparagine glycans are attached at residues Asn-13 and Asn-21. Residues 42 to 62 (VIIIICVCGLLGNLLVLAVLL) form a helical membrane-spanning segment. Residues 63 to 72 (RPRRRLNVAE) lie on the Cytoplasmic side of the membrane. Residues 73-93 (MYLANLAASDLVFVLGLPFWA) form a helical membrane-spanning segment. The Extracellular segment spans residues 94–110 (ANISNQFRWPFGGLLCR). An N-linked (GlcNAc...) asparagine glycan is attached at Asn-95. Residues Cys-109 and Cys-186 are joined by a disulfide bond. A helical transmembrane segment spans residues 111–131 (LVNGVIKANLFISIFLVVAIS). Topologically, residues 132–150 (RDRYRALVHPMATRRRRQA) are cytoplasmic. A helical membrane pass occupies residues 151-171 (RATCVLIWVAGSLLSVPTFLF). At 172–204 (RSIEAVPELNNDSACVLLHPPGAWHVARMVELN) the chain is on the extracellular side. A glycan (N-linked (GlcNAc...) asparagine) is linked at Asn-182. Residues 205–225 (VLGFLLPLAAIVFFNCHILAS) form a helical membrane-spanning segment. At 226 to 248 (LRGRPEVRGARCGGPPDGRTTAL) the chain is on the cytoplasmic side. A helical transmembrane segment spans residues 249 to 269 (ILTFVAAFLVCWTPYHFFAFL). Topologically, residues 270-292 (EFLTQVQVVRGCFWENFKDLGLQ) are extracellular. A helical membrane pass occupies residues 293–313 (YASFFAFINSCLNPVIYVFVG). Topologically, residues 314–350 (RLFRTRVWDLFKQCAPRRPPAVSWSHRKRVLQLFWQN) are cytoplasmic. Cys-327 is lipidated: S-palmitoyl cysteine.

This sequence belongs to the G-protein coupled receptor 1 family. Bradykinin receptor subfamily. BDKRB1 sub-subfamily.

The protein localises to the cell membrane. Its function is as follows. This is a receptor for bradykinin. Could be a factor in chronic pain and inflammation. The protein is B1 bradykinin receptor (BDKRB1) of Canis lupus familiaris (Dog).